Consider the following 2414-residue polypeptide: Centrosome-associated protein CEP250 (2414 aa).

Coiled-coil stretches lie at residues 91–153 (EEPN…ELVR) and 248–357 (LVAK…VEEE). Disordered stretches follow at residues 356–384 (EEDT…DPQD), 672–707 (AEEA…QETA), 1191–1212 (SRPE…DPDQ), 1269–1303 (EAQK…QNSL), 2050–2071 (AGAR…QERQ), 2194–2238 (ALEE…KERL), and 2275–2317 (RERR…GSSD). The span at 371-381 (QSDCNGLSQFD) shows a compositional bias: polar residues. A coiled-coil region spans residues 400–1165 (QQAVQDLRQQ…QLEALVAEQQ (766 aa)). Positions 684 to 704 (RGTREEKEELKDKLSEAHHQQ) are enriched in basic and acidic residues. Coiled coils occupy residues 1237–2200 (LQKL…EQQS) and 2231–2290 (GVEE…ASRA). Positions 1280–1289 (QDLQRQLSQS) are enriched in low complexity. The segment covering 2196–2209 (EEQQSGGPHSTSRA) has biased composition (polar residues). A compositionally biased stretch (basic and acidic residues) spans 2275–2286 (RERRKLKRDSVR). Ser-2292 bears the Phosphoserine mark. A compositionally biased stretch (low complexity) spans 2305-2317 (QQDGRGSQRGSSD). Residues 2320 to 2345 (LVVELQREVALLRAQLALERKQRQDY) adopt a coiled-coil conformation. Residues Ser-2389 and Ser-2393 each carry the phosphoserine; by NEK2 modification. A disordered region spans residues 2390–2414 (LNQSLTSPGPCLLHPSLDTTQNTHR).

As to quaternary structure, monomer and homodimer. Forms a complex in vitro with both NEK2 kinase and the PPP1CC catalytic subunit of protein phosphatase 1 (PP1). Interacts with CEP135. Interacts with CROCC/rootletin. Interacts with CNTLN. Interacts with NIN (via C-terminus). Differentially phosphorylated during cell cycle. Phosphorylation may regulate association/dissociation from centrosome. During M phase of mitosis, C-terminal part is phosphorylated by NEK2, suggesting that it may trigger the dissociation from the mitotic centrosome. Dephosphorylated in vitro by the PP1 phosphatase. In terms of tissue distribution, expressed in the retina.

Its subcellular location is the cytoplasm. The protein localises to the perinuclear region. The protein resides in the cytoskeleton. It is found in the microtubule organizing center. It localises to the centrosome. Its subcellular location is the centriole. The protein localises to the cilium basal body. The protein resides in the cell projection. It is found in the cilium. It localises to the photoreceptor outer segment. Its subcellular location is the photoreceptor inner segment. Its function is as follows. Plays an important role in centrosome cohesion during interphase. Recruits CCDC102B to the proximal ends of centrioles. Maintains centrosome cohesion by forming intercentriolar linkages. Accumulates at the proximal end of each centriole, forming supramolecular assemblies with viscous material properties that promote organelle cohesion. May be involved in ciliogenesis. The polypeptide is Centrosome-associated protein CEP250 (Cep250) (Mus musculus (Mouse)).